We begin with the raw amino-acid sequence, 23 residues long: Potassium channel toxin kappa-KTx 1.3 (23 aa).

Disulfide bonds link cysteine 4–cysteine 22 and cysteine 8–cysteine 18.

Belongs to the short scorpion toxin superfamily. Potassium channel inhibitor kappa-KTx family. Kappa-KTx 1 subfamily. Monomer. In terms of processing, is not amidated. In terms of tissue distribution, expressed by the venom gland.

Its subcellular location is the secreted. Functionally, shows very weak blocking activity on voltage-gated potassium channels Kv10.1/KCNH1/EAG1 (6.2% inhibition by 40 uM of the toxin). Has no effect on the other voltage-gated potassium channels tested. In Heterometrus spinifer (Asia giant forest scorpion), this protein is Potassium channel toxin kappa-KTx 1.3.